Here is a 70-residue protein sequence, read N- to C-terminus: Large ribosomal subunit protein bL31 (70 aa).

Zn(2+)-binding residues include C16, C18, C37, and C40.

The protein belongs to the bacterial ribosomal protein bL31 family. Type A subfamily. As to quaternary structure, part of the 50S ribosomal subunit. Zn(2+) serves as cofactor.

Its function is as follows. Binds the 23S rRNA. The chain is Large ribosomal subunit protein bL31 from Enterobacter sp. (strain 638).